A 214-amino-acid polypeptide reads, in one-letter code: Ras-related protein Rab2BV (214 aa).

Residue 19 to 26 (GDSGVGKS) coordinates GTP. An Effector region motif is present at residues 41 to 49 (SKSTIGVEF). Residues 67 to 71 (DTAGQ) and 125 to 128 (NKSD) contribute to the GTP site. Residues C211 and C212 are each lipidated (S-geranylgeranyl cysteine).

This sequence belongs to the small GTPase superfamily. Rab family.

It is found in the cell membrane. The polypeptide is Ras-related protein Rab2BV (RAB2BV) (Beta vulgaris (Sugar beet)).